We begin with the raw amino-acid sequence, 404 residues long: uncharacterized protein (404 aa).

Over residues 262 to 278 (VSTGDTSPCGTEDSSPA) the composition is skewed to polar residues. Disordered stretches follow at residues 262–307 (VSTG…SPSL) and 319–340 (MKKSHSANDSEEFFREDDSGAD). Residues serine 268, serine 276, and serine 279 each carry the phosphoserine modification. Threonine 290 and threonine 293 each carry phosphothreonine. Phosphoserine is present on residues serine 304, serine 306, serine 324, serine 358, and serine 362. Positions 319-336 (MKKSHSANDSEEFFREDD) are enriched in basic and acidic residues.

This is an uncharacterized protein from Mus musculus (Mouse).